The chain runs to 291 residues: Bifunctional protein FolD 1 (291 aa).

NADP(+) is bound by residues 167-169 (GAS), isoleucine 192, and isoleucine 233.

The protein belongs to the tetrahydrofolate dehydrogenase/cyclohydrolase family. Homodimer.

It catalyses the reaction (6R)-5,10-methylene-5,6,7,8-tetrahydrofolate + NADP(+) = (6R)-5,10-methenyltetrahydrofolate + NADPH. It carries out the reaction (6R)-5,10-methenyltetrahydrofolate + H2O = (6R)-10-formyltetrahydrofolate + H(+). It participates in one-carbon metabolism; tetrahydrofolate interconversion. Functionally, catalyzes the oxidation of 5,10-methylenetetrahydrofolate to 5,10-methenyltetrahydrofolate and then the hydrolysis of 5,10-methenyltetrahydrofolate to 10-formyltetrahydrofolate. This chain is Bifunctional protein FolD 1, found in Pseudomonas putida (strain ATCC 47054 / DSM 6125 / CFBP 8728 / NCIMB 11950 / KT2440).